The following is a 201-amino-acid chain: Sorting nexin-10 (201 aa).

Positions 8 to 125 (EEFVSVWVRD…SLHLFLQSHL (118 aa)) are required for interaction with ATP6V1D. Residues 10-127 (FVSVWVRDPR…HLFLQSHLNS (118 aa)) enclose the PX domain. 3 residues coordinate a 1,2-diacyl-sn-glycero-3-phospho-(1D-myo-inositol-3-phosphate): Arg53, Lys79, and Arg94. The interval 156–201 (FPEEDEEGKKENDIDYDSESSSSGLGHSSDDSSSHGCKVNTAPQES) is disordered.

This sequence belongs to the sorting nexin family. In terms of assembly, interacts with ATP6V1D; may play a role in ciliogenesis.

Its subcellular location is the cytoplasm. It is found in the endosome membrane. The protein localises to the cytoskeleton. The protein resides in the microtubule organizing center. It localises to the centrosome. Probable phosphoinositide-binding protein involved in protein sorting and membrane trafficking in endosomes. Plays a role in cilium biogenesis through regulation of the transport and the localization of proteins to the cilium. Required for the localization to the cilium of V-ATPase subunit ATP6V1D and ATP6V0D1, and RAB8A. Involved in osteoclast differentiation and therefore bone resorption. This chain is Sorting nexin-10 (SNX10), found in Homo sapiens (Human).